Consider the following 263-residue polypeptide: Glutamate racemase (263 aa).

Substrate is bound by residues Asp10–Ser11 and Tyr42–Gly43. Cys73 acts as the Proton donor/acceptor in catalysis. A substrate-binding site is contributed by Asn74 to Ser75. Cys183 (proton donor/acceptor) is an active-site residue. Residue Thr184–His185 participates in substrate binding.

It belongs to the aspartate/glutamate racemases family.

It carries out the reaction L-glutamate = D-glutamate. It participates in cell wall biogenesis; peptidoglycan biosynthesis. In terms of biological role, provides the (R)-glutamate required for cell wall biosynthesis. In Acidothermus cellulolyticus (strain ATCC 43068 / DSM 8971 / 11B), this protein is Glutamate racemase.